The following is a 969-amino-acid chain: RNA polymerase-associated protein RapA (969 aa).

The region spanning 164-334 (EVGRRHAPRV…FARLRLLDSD (171 aa)) is the Helicase ATP-binding domain. 177–184 (DEVGLGKT) contacts ATP. The DEAH box signature appears at 280 to 283 (DEAH). The Helicase C-terminal domain occupies 492–668 (RVNWLLEKLK…GSNEALNDVI (177 aa)).

This sequence belongs to the SNF2/RAD54 helicase family. RapA subfamily. As to quaternary structure, interacts with the RNAP. Has a higher affinity for the core RNAP than for the holoenzyme. Its ATPase activity is stimulated by binding to RNAP.

In terms of biological role, transcription regulator that activates transcription by stimulating RNA polymerase (RNAP) recycling in case of stress conditions such as supercoiled DNA or high salt concentrations. Probably acts by releasing the RNAP, when it is trapped or immobilized on tightly supercoiled DNA. Does not activate transcription on linear DNA. Probably not involved in DNA repair. The protein is RNA polymerase-associated protein RapA of Vibrio vulnificus (strain YJ016).